The chain runs to 183 residues: Helofensin-1 (183 aa).

The signal sequence occupies residues 1 to 26 (MQMDWLFIAVVSAIGLLSSGVPGTQG). One copy of the C(6)C(4)C(9)C(6)CC 1; approximate repeat lies at 27–64 (AYTTEQCRALNGTCRFYACFPKNVVIGKCDWLGWGCCA). The C(6)C(4)C(9)C(6)CC 2; approximate repeat unit spans residues 65-101 (RTPLERCTAKKGTCTASGCTETDTDHGPCDGGAQCCQ). One copy of the C(6)C(4)C(9)C(6)CC 3; approximate repeat lies at 102 to 139 (RDPVKYCKFHGNVCGRGKCPMDHIPIGEQCMPGYPCCK). The stretch at 140–177 (RDGPAYCKSKGGKCLRRCSQIVPTDIIGVCADGVPCCK) is one C(6)C(4)C(9)C(6)CC 4; approximate repeat.

The protein belongs to the beta-defensin family. Helofensin subfamily. Expressed by the mandibular venom gland.

Its subcellular location is the secreted. In terms of biological role, lethal toxin which possesses an inhibitory effect on direct electrical stimulation of the isolated hemi-diaphragm of mice. Neither hemorrhagic nor hemolytic activities are detected. Phospholipase A2 activity, proteolytic activity and arginine esterolytic activity are absent. This Heloderma suspectum cinctum (Banded Gila monster) protein is Helofensin-1.